The chain runs to 467 residues: Acyl-lipid (8-3)-desaturase B (467 aa).

Residues 12-89 (LKLYTWDEVS…IKQYEIGYIS (78 aa)) form the Cytochrome b5 heme-binding domain. Residues H47 and H70 each contribute to the heme site. 2 helical membrane-spanning segments follow: residues 123–143 (VSVG…VTYY) and 152–172 (FWLN…FGLH). A Histidine box-1 motif is present at residues 175–179 (HDACH). A helical transmembrane segment spans residues 187–207 (MTWKILGATFDLFAGASFYAW). Positions 211–216 (HVIGHH) match the Histidine box-2 motif. 2 helical membrane passes run 293–313 (AIFI…PLIY) and 317–337 (FSHL…YLAI). The Histidine box-3 motif lies at 400–404 (QVIHH).

Belongs to the fatty acid desaturase type 1 family. Fe(2+) serves as cofactor.

Its subcellular location is the membrane. The catalysed reaction is an (8Z,11Z,14Z)-icosatrienoyl-containing glycerolipid + 2 Fe(II)-[cytochrome b5] + O2 + 2 H(+) = (5Z,8Z,11Z,14Z)-eicosatetraenoyl-containing glycerolipid + 2 Fe(III)-[cytochrome b5] + 2 H2O. The enzyme catalyses an (8Z,11Z,14Z,17Z)-eicosatetraenoyl-containing glycerolipid + 2 Fe(II)-[cytochrome b5] + O2 + 2 H(+) = a (5Z,8Z,11Z,14Z,17Z)-eicosapentaenoyl-containing glycerolipid + 2 Fe(III)-[cytochrome b5] + 2 H2O. Functionally, fatty acid desaturase that introduces a cis double bond at the 5-position in 18-carbon polyunsaturated fatty acids. The protein is Acyl-lipid (8-3)-desaturase B (fadB) of Dictyostelium discoideum (Social amoeba).